The chain runs to 258 residues: Mediator of RNA polymerase II transcription subunit 7 (258 aa).

2 disordered regions span residues 1–39 (MLPG…PPPH) and 202–243 (EKET…PPSV). Residues 203–217 (KETEEDEEMKEDDEE) are compositionally biased toward acidic residues. Residues 220 to 229 (STSSSEGNQK) show a composition bias toward polar residues.

Belongs to the Mediator complex subunit 7 family. In terms of assembly, component of the Mediator complex.

It localises to the nucleus. In terms of biological role, component of the Mediator complex, a coactivator involved in the regulated transcription of nearly all RNA polymerase II-dependent genes. Mediator functions as a bridge to convey information from gene-specific regulatory proteins to the basal RNA polymerase II transcription machinery. Mediator is recruited to promoters by direct interactions with regulatory proteins and serves as a scaffold for the assembly of a functional preinitiation complex with RNA polymerase II and the general transcription factors. The polypeptide is Mediator of RNA polymerase II transcription subunit 7 (let-49) (Caenorhabditis briggsae).